Here is a 420-residue protein sequence, read N- to C-terminus: Protein translocase subunit SecY (420 aa).

10 helical membrane passes run 9 to 29 (ILITLGFLFLYRVLAYIPIPG), 61 to 81 (LSIISLGIMPYITSSIIMELL), 104 to 124 (IVRYLTILITLIQAVSVSVGL), 141 to 161 (VFMIVSAFSMLTGTMLLMWIG), 173 to 193 (ISLIIFAGIVSGIPSAISGTF), 203 to 223 (ILMLIGIVLIVLATIFAIIYV), 257 to 277 (LSGVIPPIFASALLVFPSTIL), 300 to 320 (YNILMFLLIIFFAYFYSSIVF), 355 to 375 (KLTLWGSLYLALISTVPWILV), and 377 to 397 (AMGVPFYFGGTAVLIVVQVAI).

The protein belongs to the SecY/SEC61-alpha family. As to quaternary structure, component of the Sec protein translocase complex. Heterotrimer consisting of SecY, SecE and SecG subunits. The heterotrimers can form oligomers, although 1 heterotrimer is thought to be able to translocate proteins. Interacts with the ribosome. Interacts with SecDF, and other proteins may be involved. Interacts with SecA.

The protein localises to the cell inner membrane. The central subunit of the protein translocation channel SecYEG. Consists of two halves formed by TMs 1-5 and 6-10. These two domains form a lateral gate at the front which open onto the bilayer between TMs 2 and 7, and are clamped together by SecE at the back. The channel is closed by both a pore ring composed of hydrophobic SecY resides and a short helix (helix 2A) on the extracellular side of the membrane which forms a plug. The plug probably moves laterally to allow the channel to open. The ring and the pore may move independently. The sequence is that of Protein translocase subunit SecY from Helicobacter pylori (strain J99 / ATCC 700824) (Campylobacter pylori J99).